The primary structure comprises 481 residues: Ras-GEF domain-containing family member 1A (481 aa).

Residues 41-170 (QDGHLISGSL…AIAQMTQSLL (130 aa)) form the N-terminal Ras-GEF domain. In terms of domain architecture, Ras-GEF spans 214-461 (DPLVLAQQLT…FVASFESEGP (248 aa)).

In terms of tissue distribution, detected in brain and spinal cord. Highly expressed in a number of intrahepatic cholangiocarcinoma tissue biopsies.

Functionally, guanine nucleotide exchange factor (GEF) with specificity for RAP2A, KRAS, HRAS, and NRAS (in vitro). Plays a role in cell migration. In Homo sapiens (Human), this protein is Ras-GEF domain-containing family member 1A (RASGEF1A).